Here is a 78-residue protein sequence, read N- to C-terminus: uncharacterized protein (78 aa).

Transmembrane regions (helical) follow at residues 25–45 (IITACSHVICVLGIIVGDEVV) and 50–70 (KCADIFMIFLVINEPFLFVFV).

Its subcellular location is the membrane. This is an uncharacterized protein from Saccharomyces cerevisiae (strain ATCC 204508 / S288c) (Baker's yeast).